A 412-amino-acid polypeptide reads, in one-letter code: uncharacterized protein (412 aa).

A UmuC domain is found at 20–199; that stretch reads FFYFDFDAFF…LPIVELPGIG (180 aa).

It belongs to the DNA polymerase type-Y family.

This is an uncharacterized protein from Mycoplasma pneumoniae (strain ATCC 29342 / M129 / Subtype 1) (Mycoplasmoides pneumoniae).